The following is a 349-amino-acid chain: 26S proteasome non-ATPase regulatory subunit 4 (349 aa).

The region spanning A5 to I188 is the VWFA domain. The 20-residue stretch at D204–R223 folds into the UIM 1 domain. Residues E219–A234 are compositionally biased toward basic and acidic residues. Disordered stretches follow at residues E219–N257 and T274–K349. Residues N235–N253 are compositionally biased toward low complexity. A UIM 2 domain is found at E259 to E278. Residues Q280–D301 show a composition bias toward low complexity. Basic and acidic residues predominate over residues L335–K349.

It belongs to the proteasome subunit S5A family. The 26S proteasome is composed of a core protease, known as the 20S proteasome, capped at one or both ends by the 19S regulatory complex (RC). The RC is composed of at least 18 different subunits in two subcomplexes, the base and the lid, which form the portions proximal and distal to the 20S proteolytic core, respectively.

Functionally, binds and presumably selects ubiquitin-conjugates for destruction. This is 26S proteasome non-ATPase regulatory subunit 4 (psmD4) from Dictyostelium discoideum (Social amoeba).